The chain runs to 154 residues: Ubiquitin-like protein 4A-A (154 aa).

The 76-residue stretch at 1 to 76 folds into the Ubiquitin-like domain; the sequence is MILTVKPLQG…LNLVVRPAGE (76 aa).

As to quaternary structure, component of the BAT3 complex.

The protein localises to the cytoplasm. It is found in the cytosol. In terms of biological role, component of the BAT3 complex, a multiprotein complex involved in the post-translational delivery of tail-anchored (TA) membrane proteins to the endoplasmic reticulum membrane. TA membrane proteins, also named type II transmembrane proteins, contain a single C-terminal transmembrane region. In Oncorhynchus mykiss (Rainbow trout), this protein is Ubiquitin-like protein 4A-A (ubl4aa).